Here is a 138-residue protein sequence, read N- to C-terminus: Ergosterol biosynthetic protein 28 (138 aa).

A helical membrane pass occupies residues 17-33; the sequence is LPYWLLFISVVSIFNSV. N-linked (GlcNAc...) asparagine glycosylation occurs at asparagine 40. The next 3 membrane-spanning stretches (helical) occupy residues 56-75, 87-107, and 114-131; these read LSAR…RFYG, LTQF…LYFG, and GLSG…WMYL.

It belongs to the ERG28 family. Heterotetramer of ERG25, ERG26, ERG27 and ERG28. ERG28 acts as a scaffold to tether ERG27 and other 4,4-demethylation-related enzymes, forming a demethylation enzyme complex, in the endoplasmic reticulum. Interacts with ERG25, ERG26 and ERG27. Also interacts with ERG1, ERG3, ERG5, ERG6 and ERG11.

The protein localises to the endoplasmic reticulum membrane. In terms of biological role, part of the third module of ergosterol biosynthesis pathway that includes the late steps of the pathway. ERG28 has a role as a scaffold to help anchor the catalytic components of the C-4 demethylation complex ERG25, ERG26 and ERG27 to the endoplasmic reticulum. The third module or late pathway involves the ergosterol synthesis itself through consecutive reactions that mainly occur in the endoplasmic reticulum (ER) membrane. Firstly, the squalene synthase ERG9 catalyzes the condensation of 2 farnesyl pyrophosphate moieties to form squalene, which is the precursor of all steroids. Squalene synthase is crucial for balancing the incorporation of farnesyl diphosphate (FPP) into sterol and nonsterol isoprene synthesis. Secondly, the squalene epoxidase ERG1 catalyzes the stereospecific oxidation of squalene to (S)-2,3-epoxysqualene, which is considered to be a rate-limiting enzyme in steroid biosynthesis. Then, the lanosterol synthase ERG7 catalyzes the cyclization of (S)-2,3 oxidosqualene to lanosterol, a reaction that forms the sterol core. In the next steps, lanosterol is transformed to zymosterol through a complex process involving various demethylation, reduction and desaturation reactions. The lanosterol 14-alpha-demethylase ERG11 (also known as CYP51) catalyzes C14-demethylation of lanosterol to produce 4,4'-dimethyl cholesta-8,14,24-triene-3-beta-ol, which is critical for ergosterol biosynthesis. The C-14 reductase ERG24 reduces the C14=C15 double bond of 4,4-dimethyl-cholesta-8,14,24-trienol to produce 4,4-dimethyl-cholesta-8,24-dienol. 4,4-dimethyl-cholesta-8,24-dienol is substrate of the C-4 demethylation complex ERG25-ERG26-ERG27 in which ERG25 catalyzes the three-step monooxygenation required for the demethylation of 4,4-dimethyl and 4alpha-methylsterols, ERG26 catalyzes the oxidative decarboxylation that results in a reduction of the 3-beta-hydroxy group at the C-3 carbon to an oxo group, and ERG27 is responsible for the reduction of the keto group on the C-3. ERG28 has a role as a scaffold to help anchor ERG25, ERG26 and ERG27 to the endoplasmic reticulum and ERG29 regulates the activity of the iron-containing C4-methylsterol oxidase ERG25. Then, the sterol 24-C-methyltransferase ERG6 catalyzes the methyl transfer from S-adenosyl-methionine to the C-24 of zymosterol to form fecosterol. The C-8 sterol isomerase ERG2 catalyzes the reaction which results in unsaturation at C-7 in the B ring of sterols and thus converts fecosterol to episterol. The sterol-C5-desaturase ERG3 then catalyzes the introduction of a C-5 double bond in the B ring to produce 5-dehydroepisterol. The C-22 sterol desaturase ERG5 further converts 5-dehydroepisterol into ergosta-5,7,22,24(28)-tetraen-3beta-ol by forming the C-22(23) double bond in the sterol side chain. Finally, ergosta-5,7,22,24(28)-tetraen-3beta-ol is substrate of the C-24(28) sterol reductase ERG4 to produce ergosterol. The chain is Ergosterol biosynthetic protein 28 from Candida albicans (strain SC5314 / ATCC MYA-2876) (Yeast).